We begin with the raw amino-acid sequence, 204 residues long: Pre-mRNA leakage protein 1 (204 aa).

The FHA domain maps to 104-172; sequence YLVGRELGHS…NGTCLNNVVI (69 aa).

In terms of assembly, belongs to the pre-mRNA retention and splicing (RES) complex composed of at least BUD13, IST3 and PML1.

Its subcellular location is the cytoplasm. The protein resides in the nucleus. Functionally, required for efficient splicing and pre-mRNA nuclear retention. The protein is Pre-mRNA leakage protein 1 (PML1) of Saccharomyces cerevisiae (strain ATCC 204508 / S288c) (Baker's yeast).